The chain runs to 189 residues: ComE operon protein 2 (189 aa).

The CMP/dCMP-type deaminase domain occupies 5 to 132; it reads SWNQYFMAQS…PYAQELFEQA (128 aa). His-70 is a Zn(2+) binding site. Glu-72 acts as the Proton donor in catalysis. Zn(2+)-binding residues include Cys-98 and Cys-101.

Belongs to the cytidine and deoxycytidylate deaminase family. The cofactor is Zn(2+).

Its function is as follows. Dispensable for transformability. The protein is ComE operon protein 2 (comEB) of Bacillus subtilis (strain 168).